The primary structure comprises 379 residues: MSELSFDAPVWHHGKALRKGYTTGSCATAAAKVAALMVLRQHLIHQVSIVTPSGVTLCLNVESPHIEGQQAIAAIRKDGGDDVDATHGMLIFARVTLNDSGEITLTGGEGIGTVTRKGVGLPLGSAAINRTPRHTIESAVREAIGPARGADVEIFAPEGEARAQKTYNSRLGILGGISIIGTTGIVTPMSEESWKRSLSLELEIKRASGLTRVILVPGNHGERFVREQMGVDTQAVVTMSNFVGYMIEEAVRLGFCQIVLVGHPGKLIKIAAGIFHTHSHIADARMETLVAHLALLGAPLELLTLVGDCDTTEAAMEHIEAYGFGHIYNHLARRICLRVMQMLRFTKTPPVCDAILFSFDNHILGSNRPVDEIAKELQC.

Belongs to the CbiD family.

The catalysed reaction is Co-precorrin-5B + S-adenosyl-L-methionine = Co-precorrin-6A + S-adenosyl-L-homocysteine. It participates in cofactor biosynthesis; adenosylcobalamin biosynthesis; cob(II)yrinate a,c-diamide from sirohydrochlorin (anaerobic route): step 6/10. Catalyzes the methylation of C-1 in cobalt-precorrin-5B to form cobalt-precorrin-6A. This is Cobalt-precorrin-5B C(1)-methyltransferase from Salmonella choleraesuis (strain SC-B67).